The primary structure comprises 361 residues: MAAADEPKPKKLKVEAPEALSENVLFGMGNPLLDISAVVDKDFLDKYSLKPNDQILAEDKHKELFDELVKKFKVEYHAGGSTQNSMKVAQWMIQEPHRAATFFGCIGIDKFGEILKSKAADAHVDAHYYEQNEQPTGTCAACITGGNRSLVANLAAANCYKKEKHLDLENNWMLVEKARVYYIAGFFLTVSPESVLKVARYAAENNRTFTLNLSAPFISQFFKEALMEVMPYVDILFGNETEAATFAREQGFETKDIKEIARKTQALPKVNSKRQRTVIFTQGRDDTIVATGNDVTAFPVLDQNQEEIVDTNGAGDAFVGGFLSQLVSNKPLTECIRAGHYAASVIIRRTGCTFPEKPDFH.

The short motif at 7-15 (PKPKKLKVE) is the Nuclear localization signal element. Asp34 serves as a coordination point for adenosine. Position 48 (Ser48) interacts with Mg(2+). The residue at position 76 (Tyr76) is a Phosphotyrosine. A Mg(2+)-binding site is contributed by Asn147. An adenosine-binding site is contributed by Gln305. Asp316 is a catalytic residue. Asp316 serves as the catalytic Proton acceptor.

It belongs to the carbohydrate kinase PfkB family. Monomer. The cofactor is Mg(2+).

It localises to the nucleus. It catalyses the reaction adenosine + ATP = AMP + ADP + H(+). The protein operates within purine metabolism; AMP biosynthesis via salvage pathway; AMP from adenosine: step 1/1. Functionally, catalyzes the phosphorylation of the purine nucleoside adenosine at the 5' position in an ATP-dependent manner. Serves as a potential regulator of concentrations of extracellular adenosine and intracellular adenine nucleotides. The protein is Adenosine kinase (Adk) of Rattus norvegicus (Rat).